The chain runs to 243 residues: Killer cell lectin-like receptor subfamily I member 1 (243 aa).

Residues 1-80 (MPHSKHRDYT…RQGPKSAVWR (80 aa)) are Cytoplasmic-facing. Short sequence motifs (ITIM motif) lie at residues 16-21 (IPYTEL) and 47-52 (LKYAEL). Residues 81 to 101 (VVTCVLGVLCVVLMITMGILV) form a helical; Signal-anchor for type II membrane protein membrane-spanning segment. At 102 to 243 (PKLFSGQEEQ…KPYACEFNKM (142 aa)) the chain is on the extracellular side. Asparagine 123, asparagine 191, asparagine 194, asparagine 200, and asparagine 214 each carry an N-linked (GlcNAc...) asparagine glycan. The 103-residue stretch at 137–239 (FGNNFYLFFR…CSSKKPYACE (103 aa)) folds into the C-type lectin domain. 2 disulfide bridges follow: cysteine 158-cysteine 238 and cysteine 217-cysteine 230.

In terms of assembly, heterodimer with KLRE1. Interacts with PTPN6. Expressed in natural killer (NK) cells.

The protein localises to the cell membrane. In terms of biological role, lectin-like receptor for natural killer (NK) cells. Heterodimer formation with KLRE1 mediates inhibition of NK cell cytolytic activity. The polypeptide is Killer cell lectin-like receptor subfamily I member 1 (Rattus norvegicus (Rat)).